The sequence spans 112 residues: T cell receptor alpha variable 21 (112 aa).

An N-terminal signal peptide occupies residues 1–19 (METLLGLLILWLQLQWVSS). The Ig-like domain maps to 21-112 (QEVTQIPAAL…DSATYLCAVR (92 aa)). Asn41 and Asn82 each carry an N-linked (GlcNAc...) asparagine glycan. A disulfide bond links Cys42 and Cys109.

In terms of assembly, alpha-beta TR is a heterodimer composed of an alpha and beta chain; disulfide-linked. The alpha-beta TR is associated with the transmembrane signaling CD3 coreceptor proteins to form the TR-CD3 (TcR or TCR). The assembly of alpha-beta TR heterodimers with CD3 occurs in the endoplasmic reticulum where a single alpha-beta TR heterodimer associates with one CD3D-CD3E heterodimer, one CD3G-CD3E heterodimer and one CD247 homodimer forming a stable octameric structure. CD3D-CD3E and CD3G-CD3E heterodimers preferentially associate with TR alpha and TR beta chains, respectively. The association of the CD247 homodimer is the last step of TcR assembly in the endoplasmic reticulum and is required for transport to the cell surface.

It localises to the cell membrane. Its function is as follows. V region of the variable domain of T cell receptor (TR) alpha chain that participates in the antigen recognition. Alpha-beta T cell receptors are antigen specific receptors which are essential to the immune response and are present on the cell surface of T lymphocytes. Recognize peptide-major histocompatibility (MH) (pMH) complexes that are displayed by antigen presenting cells (APC), a prerequisite for efficient T cell adaptive immunity against pathogens. Binding of alpha-beta TR to pMH complex initiates TR-CD3 clustering on the cell surface and intracellular activation of LCK that phosphorylates the ITAM motifs of CD3G, CD3D, CD3E and CD247 enabling the recruitment of ZAP70. In turn ZAP70 phosphorylates LAT, which recruits numerous signaling molecules to form the LAT signalosome. The LAT signalosome propagates signal branching to three major signaling pathways, the calcium, the mitogen-activated protein kinase (MAPK) kinase and the nuclear factor NF-kappa-B (NF-kB) pathways, leading to the mobilization of transcription factors that are critical for gene expression and essential for T cell growth and differentiation. The T cell repertoire is generated in the thymus, by V-(D)-J rearrangement. This repertoire is then shaped by intrathymic selection events to generate a peripheral T cell pool of self-MH restricted, non-autoaggressive T cells. Post-thymic interaction of alpha-beta TR with the pMH complexes shapes TR structural and functional avidity. The sequence is that of T cell receptor alpha variable 21 from Homo sapiens (Human).